Consider the following 262-residue polypeptide: Type III pantothenate kinase (262 aa).

An ATP-binding site is contributed by 9 to 16 (DIGNTNVK). Substrate-binding positions include Tyr103 and 110 to 113 (GADR). The active-site Proton acceptor is the Asp112. A K(+)-binding site is contributed by Asp134. Thr137 contributes to the ATP binding site. Thr190 contacts substrate.

This sequence belongs to the type III pantothenate kinase family. Homodimer. Requires NH4(+) as cofactor. K(+) serves as cofactor.

It localises to the cytoplasm. The catalysed reaction is (R)-pantothenate + ATP = (R)-4'-phosphopantothenate + ADP + H(+). The protein operates within cofactor biosynthesis; coenzyme A biosynthesis; CoA from (R)-pantothenate: step 1/5. Catalyzes the phosphorylation of pantothenate (Pan), the first step in CoA biosynthesis. The chain is Type III pantothenate kinase from Nitratidesulfovibrio vulgaris (strain ATCC 29579 / DSM 644 / CCUG 34227 / NCIMB 8303 / VKM B-1760 / Hildenborough) (Desulfovibrio vulgaris).